A 546-amino-acid polypeptide reads, in one-letter code: Probable protein kinase UbiB (546 aa).

Residues 124 to 502 (DFDIQPLASA…HVRQSQSRYL (379 aa)) enclose the Protein kinase domain. ATP is bound by residues 130–138 (LASASIAQV) and lysine 153. The active-site Proton acceptor is the aspartate 288. Helical transmembrane passes span 501–521 (YLLG…VNRP) and 522–542 (EWGL…LVGW).

It belongs to the ABC1 family. UbiB subfamily.

Its subcellular location is the cell inner membrane. It functions in the pathway cofactor biosynthesis; ubiquinone biosynthesis [regulation]. Its function is as follows. Is probably a protein kinase regulator of UbiI activity which is involved in aerobic coenzyme Q (ubiquinone) biosynthesis. The sequence is that of Probable protein kinase UbiB from Salmonella agona (strain SL483).